Consider the following 351-residue polypeptide: Biotin synthase (351 aa).

The 219-residue stretch at 44 to 262 (NRVQVSTLLS…LAVARILMPQ (219 aa)) folds into the Radical SAM core domain. [4Fe-4S] cluster-binding residues include C59, C63, and C66. [2Fe-2S] cluster is bound by residues C103, C134, C194, and R266.

Belongs to the radical SAM superfamily. Biotin synthase family. In terms of assembly, homodimer. Requires [4Fe-4S] cluster as cofactor. The cofactor is [2Fe-2S] cluster.

It carries out the reaction (4R,5S)-dethiobiotin + (sulfur carrier)-SH + 2 reduced [2Fe-2S]-[ferredoxin] + 2 S-adenosyl-L-methionine = (sulfur carrier)-H + biotin + 2 5'-deoxyadenosine + 2 L-methionine + 2 oxidized [2Fe-2S]-[ferredoxin]. The protein operates within cofactor biosynthesis; biotin biosynthesis; biotin from 7,8-diaminononanoate: step 2/2. In terms of biological role, catalyzes the conversion of dethiobiotin (DTB) to biotin by the insertion of a sulfur atom into dethiobiotin via a radical-based mechanism. This is Biotin synthase from Pseudomonas fluorescens (strain ATCC BAA-477 / NRRL B-23932 / Pf-5).